Consider the following 263-residue polypeptide: MSRLTAEAISLSFEQRGQRRAILRDLSLGLAKGESLVVLGPSGCGKSTLLNILAGFQKPDQGRVQIDGRTLEGPGGERGVVFQDDALMPWLNALDNVALGLRIRGLGKAERTARARQVLQLVGLQEYAEQSVAQLSGGQRQRLGLARALAVEPDFLLLDEPFGALDALTRERMQVLLLDLWKQTGKGLFLITHSVDEALFLATDLVVMDGPPARIVKRLPVDFARRYAAGETVRSIKADPEFGRLRQALLDEFLDVAEAEHAH.

Residues 4–235 enclose the ABC transporter domain; the sequence is LTAEAISLSF…RYAAGETVRS (232 aa). Residue 40-47 coordinates ATP; that stretch reads GPSGCGKS.

This sequence belongs to the ABC transporter superfamily. Taurine importer (TC 3.A.1.17.1) family. The complex is composed of two ATP-binding proteins (TauB), two transmembrane proteins (TauC) and a solute-binding protein (TauA).

It is found in the cell inner membrane. The catalysed reaction is taurine(out) + ATP + H2O = taurine(in) + ADP + phosphate + H(+). In terms of biological role, part of the ABC transporter complex TauABC involved in taurine import. Responsible for energy coupling to the transport system. In Pseudomonas aeruginosa (strain ATCC 15692 / DSM 22644 / CIP 104116 / JCM 14847 / LMG 12228 / 1C / PRS 101 / PAO1), this protein is Taurine import ATP-binding protein TauB.